The chain runs to 305 residues: UDP-3-O-acyl-N-acetylglucosamine deacetylase (305 aa).

3 residues coordinate Zn(2+): H78, H237, and D241. H264 serves as the catalytic Proton donor.

The protein belongs to the LpxC family. The cofactor is Zn(2+).

The enzyme catalyses a UDP-3-O-[(3R)-3-hydroxyacyl]-N-acetyl-alpha-D-glucosamine + H2O = a UDP-3-O-[(3R)-3-hydroxyacyl]-alpha-D-glucosamine + acetate. It participates in glycolipid biosynthesis; lipid IV(A) biosynthesis; lipid IV(A) from (3R)-3-hydroxytetradecanoyl-[acyl-carrier-protein] and UDP-N-acetyl-alpha-D-glucosamine: step 2/6. In terms of biological role, catalyzes the hydrolysis of UDP-3-O-myristoyl-N-acetylglucosamine to form UDP-3-O-myristoylglucosamine and acetate, the committed step in lipid A biosynthesis. This Paraburkholderia phymatum (strain DSM 17167 / CIP 108236 / LMG 21445 / STM815) (Burkholderia phymatum) protein is UDP-3-O-acyl-N-acetylglucosamine deacetylase.